The primary structure comprises 195 residues: Protein GrpE (195 aa).

It belongs to the GrpE family. As to quaternary structure, homodimer.

The protein localises to the cytoplasm. Its function is as follows. Participates actively in the response to hyperosmotic and heat shock by preventing the aggregation of stress-denatured proteins, in association with DnaK and GrpE. It is the nucleotide exchange factor for DnaK and may function as a thermosensor. Unfolded proteins bind initially to DnaJ; upon interaction with the DnaJ-bound protein, DnaK hydrolyzes its bound ATP, resulting in the formation of a stable complex. GrpE releases ADP from DnaK; ATP binding to DnaK triggers the release of the substrate protein, thus completing the reaction cycle. Several rounds of ATP-dependent interactions between DnaJ, DnaK and GrpE are required for fully efficient folding. The sequence is that of Protein GrpE from Blochmanniella floridana.